The primary structure comprises 651 residues: Transcription factor E2-alpha (651 aa).

Disordered stretches follow at residues 32–107, 131–208, and 341–378; these read ANGK…SERN, LSLS…KTPS, and DHSSNNFSPSPSTPVGSPQGLPGTSQWPRAGAPSALSP. Low complexity-rich tracts occupy residues 56–73, 131–148, and 341–354; these read SSGSWGSSDQNSSSFDPS, LSLSSPGPLSPSGIKSSS, and DHSSNNFSPSPSTP. Serine 135 and serine 140 each carry phosphoserine. The residue at position 353 (threonine 353) is a Phosphothreonine. The residue at position 357 (serine 357) is a Phosphoserine. Position 369 is an omega-N-methylarginine (arginine 369). Position 377 is a phosphoserine (serine 377). The segment at 387–422 is leucine-zipper; that stretch reads LSKMEDRLDEAIHVLRSHAVGTASDLHGLLPGHGAL. Residues 457–549 are disordered; that stretch reads HNHASLPSQP…KAEREKERRV (93 aa). The segment covering 461–479 has biased composition (low complexity); that stretch reads SLPSQPSSLPDLSQRPPDS. Lysine 496 participates in a covalent cross-link: Glycyl lysine isopeptide (Lys-Gly) (interchain with G-Cter in SUMO2). Residue serine 526 is modified to Phosphoserine. Aspartate 528 carries the phosphothreonine modification. Aspartate 533 bears the Phosphoserine mark. The span at 539–549 shows a compositional bias: basic and acidic residues; that stretch reads QKAEREKERRV. One can recognise a bHLH domain in the interval 546-599; the sequence is ERRVANNARERLRVRDINEAFKELGRMCQLHLSSEKPQTKLLILHQAVAVILSL. Lysine 622 participates in a covalent cross-link: Glycyl lysine isopeptide (Lys-Gly) (interchain with G-Cter in SUMO2).

Homodimer. Heterodimer; efficient DNA binding requires dimerization with another bHLH protein. Forms a heterodimer with TWIST1 and TWIST2. Forms a heterodimer with NEUROD1; the heterodimer is inhibited in presence of ID2, but not NR0B2, to E-box element. Forms a heterodimer with TCF15; the heterodimer binds E-box element. Forms a heterodimer with MYOG; heterodimerization enhances MYOG DNA-binding and transcriptional activities. Forms a heterodimer with ATOH8; repress transcription of TCF3 and TCF3-NEUROG3 dimer-induced transactivation of E box-dependent promoters. Component of a nuclear TAL-1 complex composed at least of CBFA2T3, LDB1, TAL1 and TCF3. Interacts with NEUROD2. Interacts with EP300. Interacts with PTF1A, TGFB1I1 and UBE2I. Interacts with BHLHA9. Interacts with ASB2; the interaction is mediated by SKP2 and targets TCF3 for Notch-induced proteasomal degradation. Interacts with transcription factor ASCL5/AmeloD. As to quaternary structure, forms a heterodimer with ATOH7; required for ATOH7 DNA-binding. In terms of assembly, interacts with RALGAPA1. Interacts with FIGLA. In terms of processing, phosphorylated following NGF stimulation. Post-translationally, undergoes Notch-induced ubiquitination and subsequent proteasomal degradation which is mediated by ASB1 or ASB2, the substrate-recognition components of probable ECS E3 ubiquitin-protein ligase complexes.

It is found in the nucleus. Transcriptional regulator involved in the initiation of neuronal differentiation and mesenchymal to epithelial transition. Heterodimers between TCF3 and tissue-specific basic helix-loop-helix (bHLH) proteins play major roles in determining tissue-specific cell fate during embryogenesis, like muscle or early B-cell differentiation. Together with TCF15, required for the mesenchymal to epithelial transition. Dimers bind DNA on E-box motifs: 5'-CANNTG-3'. Binds to the kappa-E2 site in the kappa immunoglobulin gene enhancer. Binds to IEB1 and IEB2, which are short DNA sequences in the insulin gene transcription control region. Its function is as follows. Facilitates ATOH7 binding to DNA at the consensus sequence 5'-CAGGTG-3', and positively regulates transcriptional activity. This chain is Transcription factor E2-alpha (Tcf3), found in Mus musculus (Mouse).